The primary structure comprises 50 residues: Photosystem II reaction center protein M (50 aa).

Residues 7 to 27 (GFIASLLFVGVPTIFLIGLFI) form a helical membrane-spanning segment.

Belongs to the PsbM family. In terms of assembly, PSII is composed of 1 copy each of membrane proteins PsbA, PsbB, PsbC, PsbD, PsbE, PsbF, PsbH, PsbI, PsbJ, PsbK, PsbL, PsbM, PsbT, PsbX, PsbY, Psb30/Ycf12, peripheral proteins PsbO, CyanoQ (PsbQ), PsbU, PsbV and a large number of cofactors. It forms dimeric complexes.

Its subcellular location is the cellular thylakoid membrane. In terms of biological role, one of the components of the core complex of photosystem II (PSII). PSII is a light-driven water:plastoquinone oxidoreductase that uses light energy to abstract electrons from H(2)O, generating O(2) and a proton gradient subsequently used for ATP formation. It consists of a core antenna complex that captures photons, and an electron transfer chain that converts photonic excitation into a charge separation. This subunit is found at the monomer-monomer interface. This chain is Photosystem II reaction center protein M, found in Prochlorococcus marinus (strain MIT 9312).